Consider the following 329-residue polypeptide: Vanillate O-demethylase oxygenase subunit (329 aa).

The Rieske domain occupies 1 to 84 (MICNERMVIY…AQERHGFIWV (84 aa)). 4 residues coordinate [2Fe-2S] cluster: Cys-24, His-26, Cys-43, and His-46.

Belongs to the bacterial ring-hydroxylating dioxygenase alpha subunit family. As to quaternary structure, this demethylase system consists of two proteins: an oxygenase and an oxygenase reductase. Requires [2Fe-2S] cluster as cofactor. Fe cation serves as cofactor.

The catalysed reaction is vanillate + NADH + O2 + H(+) = 3,4-dihydroxybenzoate + formaldehyde + NAD(+) + H2O. It functions in the pathway xenobiotic degradation; vanillyl-alcohol degradation. This Pseudomonas sp. (strain ATCC 19151) protein is Vanillate O-demethylase oxygenase subunit (vanA).